Consider the following 387-residue polypeptide: [LysW]-aminoadipate semialdehyde/glutamate semialdehyde transaminase (387 aa).

Residues 96–97 (GT) and F123 each bind pyridoxal 5'-phosphate. Position 126 (R126) interacts with substrate. 207–210 (DEIQ) is a pyridoxal 5'-phosphate binding site. K236 carries the post-translational modification N6-(pyridoxal phosphate)lysine. S264 lines the substrate pocket. T265 contributes to the pyridoxal 5'-phosphate binding site.

Belongs to the class-III pyridoxal-phosphate-dependent aminotransferase family. LysJ subfamily. As to quaternary structure, homodimer. Pyridoxal 5'-phosphate is required as a cofactor.

It is found in the cytoplasm. The enzyme catalyses [amino-group carrier protein]-C-terminal-gamma-(L-lysyl)-L-glutamate + 2-oxoglutarate = [amino-group carrier protein]-C-terminal-N-(1-carboxy-5-oxopentan-1-yl)-L-glutamine + L-glutamate. The catalysed reaction is [amino-group carrier protein]-C-terminal-gamma-(L-ornithyl)-L-glutamate + 2-oxoglutarate = [amino-group carrier protein]-C-terminal-gamma-(L-glutamyl-5-semialdehyde)-L-glutamate + L-glutamate. It functions in the pathway amino-acid biosynthesis; L-lysine biosynthesis via AAA pathway; L-lysine from L-alpha-aminoadipate (Thermus route): step 4/5. It participates in amino-acid biosynthesis; L-arginine biosynthesis. Functionally, involved in both the arginine and lysine biosynthetic pathways. This chain is [LysW]-aminoadipate semialdehyde/glutamate semialdehyde transaminase, found in Sulfolobus acidocaldarius (strain ATCC 33909 / DSM 639 / JCM 8929 / NBRC 15157 / NCIMB 11770).